Reading from the N-terminus, the 109-residue chain is MAGDGGRSGPSTPSTSVITKTKPRTKRPNLYRVLILNDDYTPMEFVVHVLEKFFQMDVEAATKVMLHVHHHGIGECGVFTYEIAETKVTQVMDFARKHQHPLQCVMEKK.

Residues M1 to R24 form a disordered region.

This sequence belongs to the ClpS family. In terms of assembly, binds to the N-terminal domain of the chaperone ClpA.

Functionally, involved in the modulation of the specificity of the ClpAP-mediated ATP-dependent protein degradation. The protein is ATP-dependent Clp protease adapter protein ClpS 2 of Rhodopseudomonas palustris (strain ATCC BAA-98 / CGA009).